Reading from the N-terminus, the 270-residue chain is Putative phosphoenolpyruvate synthase regulatory protein (270 aa).

Gly150 to Thr157 contributes to the ADP binding site.

Belongs to the pyruvate, phosphate/water dikinase regulatory protein family. PSRP subfamily.

It catalyses the reaction [pyruvate, water dikinase] + ADP = [pyruvate, water dikinase]-phosphate + AMP + H(+). The catalysed reaction is [pyruvate, water dikinase]-phosphate + phosphate + H(+) = [pyruvate, water dikinase] + diphosphate. Its function is as follows. Bifunctional serine/threonine kinase and phosphorylase involved in the regulation of the phosphoenolpyruvate synthase (PEPS) by catalyzing its phosphorylation/dephosphorylation. This is Putative phosphoenolpyruvate synthase regulatory protein from Shewanella frigidimarina (strain NCIMB 400).